A 417-amino-acid chain; its full sequence is MFSRDLTIAKYDADLFAAMEQEAQRQEEHIELIASENYTSPAVMEAQGSVLTNKYAEGYPGKRYYGGCEYVDVVEQLAIDRAKELFGADYANVQPHAGSQANAAVYLALLQGGDTILGMSLAHGGHLTHGAAVSSSGKLYNAIQYGIDANGLIDYDEVERLAVEHKPKMIVAGFSAYSQILDFPRFREIADKVGAYLFVDMAHVAGLVAAGVYPNPVPFADVVTTTTHKTLRGPRGGLILARANADIEKKLNSAVFPGAQGGPLEHVIAAKAICFKEALQPEFKAYQEQVVKNAQAMAEVFIARGFDVVSGGTKNHLFLLSLIKQDISGKDADAALGKAFITVNKNSVPNDPRSPFVTSGLRFGTPAVTTRGFKEAECKELAGWICDILADLNNEAVIDAVREKVKAICKKLPVYGA.

Residues Leu-121 and 125 to 127 each bind (6S)-5,6,7,8-tetrahydrofolate; that span reads GHL. Lys-229 carries the N6-(pyridoxal phosphate)lysine modification. Position 354-356 (354-356) interacts with (6S)-5,6,7,8-tetrahydrofolate; it reads SPF.

This sequence belongs to the SHMT family. As to quaternary structure, homodimer. Requires pyridoxal 5'-phosphate as cofactor.

It localises to the cytoplasm. The catalysed reaction is (6R)-5,10-methylene-5,6,7,8-tetrahydrofolate + glycine + H2O = (6S)-5,6,7,8-tetrahydrofolate + L-serine. Its pathway is one-carbon metabolism; tetrahydrofolate interconversion. The protein operates within amino-acid biosynthesis; glycine biosynthesis; glycine from L-serine: step 1/1. Its function is as follows. Catalyzes the reversible interconversion of serine and glycine with tetrahydrofolate (THF) serving as the one-carbon carrier. This reaction serves as the major source of one-carbon groups required for the biosynthesis of purines, thymidylate, methionine, and other important biomolecules. Also exhibits THF-independent aldolase activity toward beta-hydroxyamino acids, producing glycine and aldehydes, via a retro-aldol mechanism. The chain is Serine hydroxymethyltransferase 1 from Pseudomonas fluorescens (strain ATCC BAA-477 / NRRL B-23932 / Pf-5).